The primary structure comprises 340 residues: Uroporphyrinogen decarboxylase (340 aa).

Residues 21-25, Phe-40, Asp-71, Tyr-148, Ser-203, and His-316 each bind substrate; that span reads RQAGR.

The protein belongs to the uroporphyrinogen decarboxylase family. In terms of assembly, homodimer.

The protein resides in the cytoplasm. It catalyses the reaction uroporphyrinogen III + 4 H(+) = coproporphyrinogen III + 4 CO2. The protein operates within porphyrin-containing compound metabolism; protoporphyrin-IX biosynthesis; coproporphyrinogen-III from 5-aminolevulinate: step 4/4. Catalyzes the decarboxylation of four acetate groups of uroporphyrinogen-III to yield coproporphyrinogen-III. The protein is Uroporphyrinogen decarboxylase of Campylobacter jejuni subsp. jejuni serotype O:2 (strain ATCC 700819 / NCTC 11168).